A 69-amino-acid chain; its full sequence is Conotoxin Eb6.1 (69 aa).

The signal sequence occupies residues 1-17; the sequence is VLIIAVLFLTACQLTTA. A propeptide spanning residues 18–41 is cleaved from the precursor; it reads ETYSRGRQKHRARRSTDKNSKWTR. 3 disulfide bridges follow: C43–C57, C50–C61, and C56–C68.

This sequence belongs to the conotoxin O1 superfamily. As to expression, expressed by the venom duct.

It localises to the secreted. The protein is Conotoxin Eb6.1 (E1) of Conus ebraeus (Hebrew cone).